A 180-amino-acid chain; its full sequence is NADH-quinone oxidoreductase subunit I (180 aa).

4Fe-4S ferredoxin-type domains follow at residues 48-80 (IVLT…LQKA) and 90-119 (EFFR…LTPD). [4Fe-4S] cluster-binding residues include Cys60, Cys63, Cys66, Cys70, Cys99, Cys102, Cys105, and Cys109. The segment covering 161–174 (KPKGDAEHEAKPID) has biased composition (basic and acidic residues). The disordered stretch occupies residues 161 to 180 (KPKGDAEHEAKPIDVKSLLP).

This sequence belongs to the complex I 23 kDa subunit family. NDH-1 is composed of 14 different subunits. Subunits NuoA, H, J, K, L, M, N constitute the membrane sector of the complex. It depends on [4Fe-4S] cluster as a cofactor.

It localises to the cell inner membrane. The catalysed reaction is a quinone + NADH + 5 H(+)(in) = a quinol + NAD(+) + 4 H(+)(out). Functionally, NDH-1 shuttles electrons from NADH, via FMN and iron-sulfur (Fe-S) centers, to quinones in the respiratory chain. The immediate electron acceptor for the enzyme in this species is believed to be ubiquinone. Couples the redox reaction to proton translocation (for every two electrons transferred, four hydrogen ions are translocated across the cytoplasmic membrane), and thus conserves the redox energy in a proton gradient. This chain is NADH-quinone oxidoreductase subunit I, found in Aeromonas salmonicida (strain A449).